Reading from the N-terminus, the 182-residue chain is Nucleoid-associated protein At2g24020, chloroplastic (182 aa).

The N-terminal 48 residues, 1-48, are a transit peptide targeting the chloroplast; it reads MASMAATTNFTKSMLFPFSHVSGNASLNSQRRTWPKQYKSKNGYRSLR.

Belongs to the YbaB/EbfC family. In terms of assembly, homodimer. Interacts with ALB3 and ALB4.

Its subcellular location is the plastid. It is found in the chloroplast stroma. Functionally, participates with ALB4 in thylakoid protein targeting. May function with specific subset of thylakoidal proteins. Binds to DNA and alters its conformation. May be involved in regulation of gene expression, nucleoid organization and DNA protection. This chain is Nucleoid-associated protein At2g24020, chloroplastic, found in Arabidopsis thaliana (Mouse-ear cress).